Reading from the N-terminus, the 167-residue chain is Neutrophilic granule protein (167 aa).

Positions 1 to 21 (MAGLWKTFVLVVALAVVSCEA) are cleaved as a signal peptide. Positions 122–141 (EDTQETSFNDKQDVSEKEKF) are disordered.

The protein belongs to the cathelicidin family. As to quaternary structure, monomer. Homodimer; disulfide-linked. Expressed in myeloid bone marrow cells. Expressed in neutrophilic precursors (at protein level). Expressed in myeloid bone marrow cells.

The protein resides in the secreted. The protein localises to the cytoplasmic granule. Functionally, acts as an inhibitor of cathepsin B (CTSB) activity. Plays a role as a negative regulator of tumor vascular development, cell invasion and metastasis. This Mus musculus (Mouse) protein is Neutrophilic granule protein.